The sequence spans 327 residues: METQIHQLEQEAYTAVLRAFKAQSDAISWEKESLITELRKELRVSDDEHRELLSRVNKDDTIQRIRDWRQGGASQITRHATIQPFDVLPSPTFSAARKKQKTFPSYNPSIGATGNRSFNNRLVSSGISGNESAEALIGRKVWTKWPEDNHFYEAIITQYNADEGRHALVYDIHAANETWEWVDLKEIPPEDIRWDGEESGVALNIGHGSASFRGNRRGQIHGGRGRGPRIHQPRRELVPPPTQQNGSGGRRTSSDDIELFNTDSLVKEVERVFDSTHPDPLELDKAKKMLKEHEQALIAAIARLADTSDGEMDGDPPYSHDHPMPQG.

Residues 1–88 (METQIHQLEQ…HATIQPFDVL (88 aa)) form the ENT domain. Positions 32 to 58 (ESLITELRKELRVSDDEHRELLSRVNK) form a coiled coil. 2 disordered regions span residues 206–257 (GHGS…SDDI) and 305–327 (ADTSDGEMDGDPPYSHDHPMPQG). Residues 214–232 (GNRRGQIHGGRGRGPRIHQ) show a composition bias toward basic residues. Residues 281-306 (LELDKAKKMLKEHEQALIAAIARLAD) adopt a coiled-coil conformation. Position 308 is a phosphoserine (Ser308). Positions 318 to 327 (YSHDHPMPQG) are enriched in basic and acidic residues.

In terms of assembly, isoform 1 interacts with EDM2 in nucleus.

The protein resides in the nucleus. Its function is as follows. Probably involved in the regulation of chromatin states. Contributes to RPP7-mediated and basal immunity, especially against Hyaloperonospora arabidopsidis isolate Hiks1. Regulates negatively EDM2-dependent floral transition. The chain is Protein EMSY-LIKE 1 from Arabidopsis thaliana (Mouse-ear cress).